We begin with the raw amino-acid sequence, 188 residues long: Dual specificity protein phosphatase 18 (188 aa).

The region spanning 19–160 (GLSQITKSLY…LIHYEFQLFG (142 aa)) is the Tyrosine-protein phosphatase domain. Residues 95–141 (MKQGRTLLHCAAGVSRSAALCLAYLMKYHAMSLLDAHTWTKSCRPII) are sufficient for mitochondrial localization. Cys104 functions as the Phosphocysteine intermediate in the catalytic mechanism.

The protein belongs to the protein-tyrosine phosphatase family. Non-receptor class dual specificity subfamily.

The protein localises to the cytoplasm. It localises to the nucleus. Its subcellular location is the mitochondrion inner membrane. The enzyme catalyses O-phospho-L-tyrosyl-[protein] + H2O = L-tyrosyl-[protein] + phosphate. The catalysed reaction is O-phospho-L-seryl-[protein] + H2O = L-seryl-[protein] + phosphate. It catalyses the reaction O-phospho-L-threonyl-[protein] + H2O = L-threonyl-[protein] + phosphate. In terms of biological role, can dephosphorylate single and diphosphorylated synthetic MAPK peptides, with preference for the phosphotyrosine and diphosphorylated forms over phosphothreonine. In vitro, dephosphorylates p-nitrophenyl phosphate (pNPP). The protein is Dual specificity protein phosphatase 18 (DUSP18) of Pongo abelii (Sumatran orangutan).